A 298-amino-acid polypeptide reads, in one-letter code: Probable endonuclease 4 (298 aa).

Zn(2+)-binding residues include H69, H111, E146, D180, H183, H215, D228, H230, and E260.

The protein belongs to the AP endonuclease 2 family. It depends on Zn(2+) as a cofactor.

The enzyme catalyses Endonucleolytic cleavage to 5'-phosphooligonucleotide end-products.. Its function is as follows. Endonuclease IV plays a role in DNA repair. It cleaves phosphodiester bonds at apurinic or apyrimidinic (AP) sites, generating a 3'-hydroxyl group and a 5'-terminal sugar phosphate. This Bacillus cereus (strain 03BB102) protein is Probable endonuclease 4.